Here is a 578-residue protein sequence, read N- to C-terminus: MNLQQLLEQKISAALHAAGAPEGSPAIVKPSGKPQFGDYQANGVMGAAKALKMNPRELATKVLDVLDLGDMAEKVEIAGPGFINIFLSKDWMSQSLRQVLADPRLTIPLDSPKQTVVVDYSAPNLAKEMHVGHLRSTIIGDAVVRTLEFLGHRVIRQNHVGDWGTQFGMLLAYMNKLKAENQQTLSMELADLENFYRQAKTCFDEDPEFKDSARQYVVKLQSGDQECVSLWKTFIDISLQHCEDVYERLNVSLTRADVMPESAYNEDLPNVIDDLREKGLLTNSDGAECVFMDEFKGKDDETLPLIVKKSDGGYLYATTDLAALRYRERVLKANRVLYFVDARQSLHLNQVYAAGRKAGFVSPDMSLEHMAFGMVLGADGKPFKTRDGGTVKLADLLTEAQGRAYAVVKGKNPEMPEEELNRIAHVVGMAAVKYADLSKNRSSDYIFSFDAMLSLEGNTAPYVQYAYSRVVNVFKKGEVGNLTFEGDLQLAEPIERALAVRLLQFNEILHSVASEGCPHILCGYLYDLSKEFASFYEGCPVLKAEEPVRSSRLMLSLLIAKTLKQGLDLLGIETLERM.

The 'HIGH' region motif lies at 123–133; that stretch reads PNLAKEMHVGH.

Belongs to the class-I aminoacyl-tRNA synthetase family. In terms of assembly, monomer.

Its subcellular location is the cytoplasm. The catalysed reaction is tRNA(Arg) + L-arginine + ATP = L-arginyl-tRNA(Arg) + AMP + diphosphate. The polypeptide is Arginine--tRNA ligase (Hahella chejuensis (strain KCTC 2396)).